The following is a 130-amino-acid chain: Large ribosomal subunit protein bL19 (130 aa).

Belongs to the bacterial ribosomal protein bL19 family.

In terms of biological role, this protein is located at the 30S-50S ribosomal subunit interface and may play a role in the structure and function of the aminoacyl-tRNA binding site. The polypeptide is Large ribosomal subunit protein bL19 (Psychrobacter arcticus (strain DSM 17307 / VKM B-2377 / 273-4)).